We begin with the raw amino-acid sequence, 469 residues long: ATP-dependent protease ATPase subunit HslU (469 aa).

ATP is bound by residues isoleucine 24, 66–71, aspartate 282, glutamate 347, and arginine 419; that span reads GVGKTE.

This sequence belongs to the ClpX chaperone family. HslU subfamily. In terms of assembly, a double ring-shaped homohexamer of HslV is capped on each side by a ring-shaped HslU homohexamer. The assembly of the HslU/HslV complex is dependent on binding of ATP.

The protein resides in the cytoplasm. Its function is as follows. ATPase subunit of a proteasome-like degradation complex; this subunit has chaperone activity. The binding of ATP and its subsequent hydrolysis by HslU are essential for unfolding of protein substrates subsequently hydrolyzed by HslV. HslU recognizes the N-terminal part of its protein substrates and unfolds these before they are guided to HslV for hydrolysis. In Listeria welshimeri serovar 6b (strain ATCC 35897 / DSM 20650 / CCUG 15529 / CIP 8149 / NCTC 11857 / SLCC 5334 / V8), this protein is ATP-dependent protease ATPase subunit HslU.